Reading from the N-terminus, the 688-residue chain is Potassium-transporting ATPase ATP-binding subunit (688 aa).

4 helical membrane passes run 37–57, 65–85, 219–239, and 262–282; these read FLVYISSILTTILYAVSLVGI, ILGITIILWLTVLFANFAEAI, IALQILLISLTIIFLLVTVSL, and VALLVCLAPTTIGALLSSIGI. Residue Asp313 is the 4-aspartylphosphate intermediate of the active site. ATP contacts are provided by residues Asp350, Glu354, 383-390, and Lys401; that span reads FTAKTRMS. 2 residues coordinate Mg(2+): Asp524 and Asp528. 3 helical membrane-spanning segments follow: residues 594-614, 622-642, and 668-688; these read FAIIPALFIGLYPGLSALNIM, AIFSAIIYNALIIVALIPLAL, and IIVPFIAIKVIDVLITAIGIV.

Belongs to the cation transport ATPase (P-type) (TC 3.A.3) family. Type IA subfamily. As to quaternary structure, the system is composed of three essential subunits: KdpA, KdpB and KdpC.

It localises to the cell membrane. It carries out the reaction K(+)(out) + ATP + H2O = K(+)(in) + ADP + phosphate + H(+). In terms of biological role, part of the high-affinity ATP-driven potassium transport (or Kdp) system, which catalyzes the hydrolysis of ATP coupled with the electrogenic transport of potassium into the cytoplasm. This subunit is responsible for energy coupling to the transport system and for the release of the potassium ions to the cytoplasm. This is Potassium-transporting ATPase ATP-binding subunit from Clostridium botulinum (strain Alaska E43 / Type E3).